A 240-amino-acid chain; its full sequence is MILLISDLHLQEERPDISRAFLDLLDGRARHAKALYILGDFFEAWIGDDAMTPFQQSICQAMRRLSDSGTAIYLMHGNRDFLIGQAFCKAAGCTLLNDPSVIELGGEQVLLMHGDTLCTRDLGYMKMRRLLRNPLSLWILRHLPLSARYKLARKLRSESRTQVRMKSTEIVDVTPEEVPKVMAAHGVRTLVHGHTHRPAIHKLMVDGQPARRIVLGDWDRRGWALQVDEQGFQLAPFEFS.

5 residues coordinate Mn(2+): Asp-7, His-9, Asp-40, Asn-78, and His-113. A substrate-binding site is contributed by 78 to 79 (NR). 4 residues coordinate substrate: Asp-121, Ser-159, Lys-166, and His-194. Mn(2+) contacts are provided by His-194 and His-196.

It belongs to the LpxH family. Mn(2+) is required as a cofactor.

It is found in the cell inner membrane. The catalysed reaction is UDP-2-N,3-O-bis[(3R)-3-hydroxytetradecanoyl]-alpha-D-glucosamine + H2O = 2-N,3-O-bis[(3R)-3-hydroxytetradecanoyl]-alpha-D-glucosaminyl 1-phosphate + UMP + 2 H(+). The protein operates within glycolipid biosynthesis; lipid IV(A) biosynthesis; lipid IV(A) from (3R)-3-hydroxytetradecanoyl-[acyl-carrier-protein] and UDP-N-acetyl-alpha-D-glucosamine: step 4/6. Hydrolyzes the pyrophosphate bond of UDP-2,3-diacylglucosamine to yield 2,3-diacylglucosamine 1-phosphate (lipid X) and UMP by catalyzing the attack of water at the alpha-P atom. Involved in the biosynthesis of lipid A, a phosphorylated glycolipid that anchors the lipopolysaccharide to the outer membrane of the cell. This chain is UDP-2,3-diacylglucosamine hydrolase, found in Pseudomonas putida (strain ATCC 47054 / DSM 6125 / CFBP 8728 / NCIMB 11950 / KT2440).